The primary structure comprises 2245 residues: Basic helix-loop-helix domain-containing protein USF3 (2245 aa).

Positions 1–28 are disordered; that stretch reads MPEMTENETPTKKQHRKKNRETHNAVER. One can recognise a bHLH domain in the interval 18–69; it reads KNRETHNAVERHRKKKINAGINRIGELIPCSPALKQSKNMILDQAFKYITEL. A coiled-coil region spans residues 77-112; sequence LLNGGNNEQAEEIKKLRKQLEEIQKENGRYIELLKA. 13 disordered regions span residues 271-290, 447-470, 881-900, 906-933, 1015-1041, 1164-1238, 1307-1331, 1460-1624, 1636-1664, 1736-1764, 1777-1815, 1834-1859, and 1891-2031; these read LHTC…QENP, SQTP…TSNH, SKSK…VTSE, AAKS…ALSD, KNPQ…IVDS, PSEA…SITS, IPNS…AKRA, IKQQ…VSGH, LEQQ…ERNR, TFKP…GNPV, ISQN…ENTC, GSQR…YNCP, and STLN…QPAT. The span at 273-288 shows a compositional bias: polar residues; sequence TCLNDQNSSENKNGQE. A compositionally biased stretch (low complexity) spans 881 to 896; it reads SKSKSAEKSSPPSQES. A compositionally biased stretch (polar residues) spans 912–925; sequence STPNLQQETSQDKP. Polar residues-rich tracts occupy residues 1185 to 1202 and 1219 to 1238; these read GTGQ…QGSI and IKTS…SITS. A compositionally biased stretch (basic and acidic residues) spans 1319–1331; the sequence is PSHESRKDSAKRA. The span at 1462-1478 shows a compositional bias: low complexity; the sequence is QQQQQQQQQQQQQQQQQ. 2 stretches are compositionally biased toward polar residues: residues 1501 to 1520 and 1528 to 1538; these read SVHS…QEVQ and VQGTQTSQLSL. The span at 1560–1569 shows a compositional bias: low complexity; it reads QQMQQQMQQH. Residues 1570 to 1585 are compositionally biased toward polar residues; sequence FGSSQTEKSCENPSTS. Residues 1593–1624 show a composition bias toward low complexity; it reads QNHLNQDIMHQQQDVGSRQQGSGVSSEHVSGH. The span at 1636–1654 shows a compositional bias: polar residues; that stretch reads LEQQMVSQPSIVTRSSDMT. Polar residues-rich tracts occupy residues 1904–1923 and 1998–2007; these read GDIQ…SNPM and SGNQRQSTVF.

Its subcellular location is the nucleus. In terms of biological role, involved in the negative regulation of epithelial-mesenchymal transition, the process by which epithelial cells lose their polarity and adhesion properties to become mesenchymal cells with enhanced migration and invasive properties. This chain is Basic helix-loop-helix domain-containing protein USF3, found in Homo sapiens (Human).